The following is a 411-amino-acid chain: Growth-regulating factor 7 (411 aa).

Residues 38 to 73 (PFTPTQWMELEHQALIYKHIVANAPVPAGLLLPIRR) form the QLQ domain. The WRC domain occupies 108 to 152 (DSEPGRCRRTDGKKWRCSRDAVVDQKYCERHINRGRHRSRKHVEG). 2 short sequence motifs (bipartite nuclear localization signal) span residues 113–123 (RCRRTDGKKWR) and 141–148 (RGRHRSRK). Positions 333–369 (FFTNTSSASDDKGKSRHPPSLNLLADGHTTSPQLQSP) are disordered. Positions 360–369 (HTTSPQLQSP) are enriched in polar residues.

The protein belongs to the GRF family.

It localises to the nucleus. Functionally, transcription activator that plays a regulatory role in gibberellin-induced stem elongation. The protein is Growth-regulating factor 7 (GRF7) of Oryza sativa subsp. japonica (Rice).